We begin with the raw amino-acid sequence, 993 residues long: Isoleucine--tRNA ligase, mitochondrial (993 aa).

A mitochondrion-targeting transit peptide spans 1 to 29 (SLWGTPRLPCSPGWQGATKRLLVRSVSGA). An N6-acetyllysine; alternate modification is found at Lys55. Lys55 is subject to N6-succinyllysine; alternate. Residues 97–107 (PYANGDPHVGH) carry the 'HIGH' region motif. Lys170 is modified (N6-acetyllysine). Position 175 is an N6-succinyllysine (Lys175). Position 214 is an N6-acetyllysine (Lys214). The residue at position 222 (Lys222) is an N6-acetyllysine; alternate. Lys222 is subject to N6-succinyllysine; alternate. Residues Lys460 and Lys481 each carry the N6-succinyllysine modification. ATP is bound by residues Lys645 and Lys648. The 'KMSKS' region signature appears at 645-649 (KMSKS). Residue Lys706 is modified to N6-acetyllysine. Lys756 and Lys762 each carry N6-acetyllysine; alternate. An N6-succinyllysine; alternate mark is found at Lys756 and Lys762.

The protein belongs to the class-I aminoacyl-tRNA synthetase family.

It is found in the mitochondrion matrix. It catalyses the reaction tRNA(Ile) + L-isoleucine + ATP = L-isoleucyl-tRNA(Ile) + AMP + diphosphate. Functionally, aminoacyl-tRNA synthetase that catalyzes the specific attachment of isoleucine to its cognate tRNA (tRNA(Ile)). The sequence is that of Isoleucine--tRNA ligase, mitochondrial (IARS2) from Macaca fascicularis (Crab-eating macaque).